Consider the following 464-residue polypeptide: MLTKTIKDQNKFQKDSTIGSYWITTFGCQMNKADSERMAGTLEKMGYTRADDELKADLVLYNTCTIRDNAEQKVYSFLGRQAKRKHKIPSLKLVVAGCLAQQEGESLLRRVPELDLVMGPQHVNNLENLLGKVDLGNQVAATEETFISEDITNARRESSICGWVNIIYGCNERCSYCVVPSVRGKEQSRYPDAIKSEIQKLANDNFKEITLLGQNIDAYGRDLPGTTKEGRKENTLTDLLYYIHDVEGIRRIRFATSHPRYFSRRLIQACYELDKVCEHFHIPFQSGNNEILKLMARGYTIDKYKRIIENIRSLMPNASITADAIVAFPGESEEQYRDTLKLISDIGFDQVMTAAYSPRPNTPAALWHNQISEEVKKERLKEINELVETTSKQRNERYLDSIESVLIEGFNPKNSSQIMGRTRTNRLTFVEIPKNIKFNFSLGDEIDVKINEARPFSLTGILCL.

Residues 19 to 135 (GSYWITTFGC…LENLLGKVDL (117 aa)) enclose the MTTase N-terminal domain. 6 residues coordinate [4Fe-4S] cluster: C28, C64, C98, C170, C174, and C177. The 238-residue stretch at 156–393 (RESSICGWVN…NELVETTSKQ (238 aa)) folds into the Radical SAM core domain. The 69-residue stretch at 396–464 (ERYLDSIESV…PFSLTGILCL (69 aa)) folds into the TRAM domain.

Belongs to the methylthiotransferase family. MiaB subfamily. As to quaternary structure, monomer. [4Fe-4S] cluster serves as cofactor.

The protein resides in the cytoplasm. It catalyses the reaction N(6)-dimethylallyladenosine(37) in tRNA + (sulfur carrier)-SH + AH2 + 2 S-adenosyl-L-methionine = 2-methylsulfanyl-N(6)-dimethylallyladenosine(37) in tRNA + (sulfur carrier)-H + 5'-deoxyadenosine + L-methionine + A + S-adenosyl-L-homocysteine + 2 H(+). Functionally, catalyzes the methylthiolation of N6-(dimethylallyl)adenosine (i(6)A), leading to the formation of 2-methylthio-N6-(dimethylallyl)adenosine (ms(2)i(6)A) at position 37 in tRNAs that read codons beginning with uridine. This Prochlorococcus marinus (strain MIT 9215) protein is tRNA-2-methylthio-N(6)-dimethylallyladenosine synthase.